The following is a 160-amino-acid chain: MSDRIYLTKQGYNRMRDELNLLKTVVRKEVLEKIAEARAHGDLSENAEYEAAREQQAQMESKIVDLENKLTRASILDPKQIRTDRVYILTSVKLRNLDETDDEIIEYTLVSSEEADTDQGKISVRSPVGKALIGKAVGEKVQIHVPKGELHYEILEIFVK.

The stretch at Leu43 to Ile75 forms a coiled coil.

This sequence belongs to the GreA/GreB family.

Necessary for efficient RNA polymerase transcription elongation past template-encoded arresting sites. The arresting sites in DNA have the property of trapping a certain fraction of elongating RNA polymerases that pass through, resulting in locked ternary complexes. Cleavage of the nascent transcript by cleavage factors such as GreA or GreB allows the resumption of elongation from the new 3'terminus. GreA releases sequences of 2 to 3 nucleotides. The polypeptide is Transcription elongation factor GreA (Prosthecochloris aestuarii (strain DSM 271 / SK 413)).